A 423-amino-acid polypeptide reads, in one-letter code: Methanol:N,N-dimethyl-4-nitrosoaniline oxidoreductase (423 aa).

The protein belongs to the iron-containing alcohol dehydrogenase family. In terms of assembly, homodecamer. The cofactor is Mg(2+). Requires Zn(2+) as cofactor. It depends on NADPH as a cofactor.

It carries out the reaction methanol + A = formaldehyde + AH2. In terms of biological role, catalyzes the oxidation of methanol to yield formaldehyde. While the in vivo electron acceptor is not known, N,N-dimethyl-4-nitrosoaniline (NDMA) can serve this function in vitro and is reduced to 4-(hydroxylamino)-N,N-dimethylaniline. This Rhodococcus erythropolis (Arthrobacter picolinophilus) protein is Methanol:N,N-dimethyl-4-nitrosoaniline oxidoreductase (thcE).